The following is a 306-amino-acid chain: Enoyl-CoA isomerase/hydratase MYCGRDRAFT_76805 (306 aa).

Residues 103–107 (AGADL) and Gly-150 contribute to the substrate site.

Belongs to the enoyl-CoA hydratase/isomerase family.

It catalyses the reaction a (3S)-3-hydroxyacyl-CoA = a (2E)-enoyl-CoA + H2O. The enzyme catalyses a 4-saturated-(3S)-3-hydroxyacyl-CoA = a (3E)-enoyl-CoA + H2O. It functions in the pathway siderophore biosynthesis. Its function is as follows. Enoyl-CoA isomerase/hydratase involved in the biosynthesis of a ferrichrome A-like siderophore which may contribute to organismal virulence. The first step of siderophore biosynthesis is performed by the HMG-CoA synthase (HMGS) MYCGRDRAFT_54740 which catalyzes the generation of HMG-CoA and CoA using acetoacetyl-CoA and acetyl-CoA as substrates. The enoyl-CoA isomerase/hydratase MYCGRDRAFT_76805 then catalyzes the conversion of HMG-CoA to methylglutaconyl-CoA. The acyltransferase MYCGRDRAFT_85486 then fuses methylglutaconyl-CoA with hydroxyornithine to yield methylglutaconyl hydroxyornithine. Methylglutaconyl hydroxyornithine is then available for use by the nonribosomal peptide synthetase NRPS2 to generate the ferrichrome A-like siderophore. This is Enoyl-CoA isomerase/hydratase MYCGRDRAFT_76805 from Zymoseptoria tritici (strain CBS 115943 / IPO323) (Speckled leaf blotch fungus).